The chain runs to 78 residues: Large ribosomal subunit protein bL28 (78 aa).

It belongs to the bacterial ribosomal protein bL28 family.

The chain is Large ribosomal subunit protein bL28 from Gloeothece citriformis (strain PCC 7424) (Cyanothece sp. (strain PCC 7424)).